Reading from the N-terminus, the 534-residue chain is Probable glycine dehydrogenase (decarboxylating) subunit 2 (534 aa).

Lys273 carries the post-translational modification N6-(pyridoxal phosphate)lysine.

The protein belongs to the GcvP family. C-terminal subunit subfamily. In terms of assembly, the glycine cleavage system is composed of four proteins: P, T, L and H. In this organism, the P 'protein' is a heterodimer of two subunits. It depends on pyridoxal 5'-phosphate as a cofactor.

The enzyme catalyses N(6)-[(R)-lipoyl]-L-lysyl-[glycine-cleavage complex H protein] + glycine + H(+) = N(6)-[(R)-S(8)-aminomethyldihydrolipoyl]-L-lysyl-[glycine-cleavage complex H protein] + CO2. Its function is as follows. The glycine cleavage system catalyzes the degradation of glycine. The P protein binds the alpha-amino group of glycine through its pyridoxal phosphate cofactor; CO(2) is released and the remaining methylamine moiety is then transferred to the lipoamide cofactor of the H protein. In Bacillus cereus (strain ATCC 14579 / DSM 31 / CCUG 7414 / JCM 2152 / NBRC 15305 / NCIMB 9373 / NCTC 2599 / NRRL B-3711), this protein is Probable glycine dehydrogenase (decarboxylating) subunit 2.